Consider the following 38-residue polypeptide: Cytochrome b6-f complex subunit 5 (38 aa).

A helical transmembrane segment spans residues 5–25 (LVLGIVLGLIPITLAGLFVAA).

Belongs to the PetG family. The 4 large subunits of the cytochrome b6-f complex are cytochrome b6, subunit IV (17 kDa polypeptide, PetD), cytochrome f and the Rieske protein, while the 4 small subunits are PetG, PetL, PetM and PetN. The complex functions as a dimer.

It is found in the cellular thylakoid membrane. Functionally, component of the cytochrome b6-f complex, which mediates electron transfer between photosystem II (PSII) and photosystem I (PSI), cyclic electron flow around PSI, and state transitions. PetG is required for either the stability or assembly of the cytochrome b6-f complex. The protein is Cytochrome b6-f complex subunit 5 of Microcystis aeruginosa (strain NIES-843 / IAM M-2473).